The chain runs to 160 residues: MPSFDIVSEIDNQEVRNAVENAQRELETRFDFRGVEASFEWTSKETTLSAEADFQLQQMLDILRNKLIKRNVDPDTMEVGDPEHSGKTFSQKITFLEGIDAPTAKKLVKLIKDSKLKVQASIQGDQVRVTGKKRDDLQAVMALVREGKLGQPFQFNNFRD.

Belongs to the YajQ family.

Functionally, nucleotide-binding protein. The chain is Nucleotide-binding protein TERTU_3542 from Teredinibacter turnerae (strain ATCC 39867 / T7901).